Reading from the N-terminus, the 313-residue chain is Homoserine O-succinyltransferase (313 aa).

The active-site Acyl-thioester intermediate is the Cys-142. Residues Lys-163 and Ser-192 each coordinate substrate. His-235 functions as the Proton acceptor in the catalytic mechanism. Residue Glu-237 is part of the active site. A substrate-binding site is contributed by Arg-249.

The protein belongs to the MetA family.

The protein resides in the cytoplasm. The catalysed reaction is L-homoserine + succinyl-CoA = O-succinyl-L-homoserine + CoA. The protein operates within amino-acid biosynthesis; L-methionine biosynthesis via de novo pathway; O-succinyl-L-homoserine from L-homoserine: step 1/1. Its function is as follows. Transfers a succinyl group from succinyl-CoA to L-homoserine, forming succinyl-L-homoserine. The sequence is that of Homoserine O-succinyltransferase from Vibrio vulnificus (strain YJ016).